A 487-amino-acid chain; its full sequence is Serine/threonine-protein kinase 4 (487 aa).

An N-acetylmethionine modification is found at methionine 1. Residue threonine 3 is modified to Phosphothreonine. The 252-residue stretch at 30–281 (FDVLEKLGEG…ATQLLQHPFV (252 aa)) folds into the Protein kinase domain. Residues 36-44 (LGEGSYGSV) and lysine 59 contribute to the ATP site. Aspartate 149 serves as the catalytic Proton acceptor. The residue at position 183 (threonine 183) is a Phosphothreonine; by autocatalysis. At serine 265 the chain carries Phosphoserine. The stretch at 290–310 (LRDLINEAMDVKLKRQESQQR) forms a coiled coil. Residues 303-312 (KRQESQQREV) show a composition bias toward basic and acidic residues. The interval 303 to 332 (KRQESQQREVDQDDEENSEEDEMDSGTMVR) is disordered. The span at 313–326 (DQDDEENSEEDEMD) shows a compositional bias: acidic residues. Serine 320 is subject to Phosphoserine. Phosphothreonine occurs at positions 340 and 367. Residue threonine 387 is modified to Phosphothreonine; by PKB/AKT1. Residues serine 410 and serine 414 each carry the phosphoserine modification. A Phosphotyrosine modification is found at tyrosine 433. The region spanning 433-480 (YEFLKSWTVEDLQKRLLALDPMMEQEIEEIRQKYQSKRQPILDAIEAK) is the SARAH domain.

It belongs to the protein kinase superfamily. STE Ser/Thr protein kinase family. STE20 subfamily. As to quaternary structure, homodimer; mediated via the coiled-coil region. Interacts with NORE1, which inhibits autoactivation. Interacts with and stabilizes SAV1. Interacts with RASSF1. Interacts with FOXO3. Interacts with RASSF2 (via SARAH domain). Interacts with AR, PKB/AKT1, TNNI3 and SIRT1. Interacts with DLG5 (via PDZ domain 3). Interacts with MARK3 and SCRIB in the presence of DLG5. Mg(2+) serves as cofactor. Autophosphorylated on serine and threonine residues. Phosphorylation at Thr-387 by PKB/AKT1, leads to inhibition of its: kinase activity, nuclear translocation and autophosphorylation at Thr-183. It also diminishes its cleavage by caspases and its ability to phosphorylate FOXO3. Post-translationally, proteolytically cleaved by caspase-3 during apoptosis at Asp-326 and Asp-349 resulting in a 37 kDa or a 39 kDa subunit respectively. The 39 kDa subunit is further cleaved into the 37 kDa form. Proteolytic cleavage results in kinase activation and nuclear translocation of the truncated form (MST1/N). It is less likely that cleavage at Asp-349 is a prerequisite for activation as this site is not conserved in the murine ortholog.

The protein resides in the cytoplasm. Its subcellular location is the nucleus. The enzyme catalyses L-seryl-[protein] + ATP = O-phospho-L-seryl-[protein] + ADP + H(+). The catalysed reaction is L-threonyl-[protein] + ATP = O-phospho-L-threonyl-[protein] + ADP + H(+). Its activity is regulated as follows. Inhibited by the C-terminal non-catalytic region. Activated by caspase-cleavage. Full activation also requires homodimerization and autophosphorylation of Thr-183. Activated by RASSF1 which acts by preventing its dephosphorylation. In terms of biological role, stress-activated, pro-apoptotic kinase which, following caspase-cleavage, enters the nucleus and induces chromatin condensation followed by internucleosomal DNA fragmentation. Key component of the Hippo signaling pathway which plays a pivotal role in organ size control and tumor suppression by restricting proliferation and promoting apoptosis. The core of this pathway is composed of a kinase cascade wherein STK3/MST2 and STK4/MST1, in complex with its regulatory protein SAV1, phosphorylates and activates LATS1/2 in complex with its regulatory protein MOB1, which in turn phosphorylates and inactivates YAP1 oncoprotein and WWTR1/TAZ. Phosphorylation of YAP1 by LATS2 inhibits its translocation into the nucleus to regulate cellular genes important for cell proliferation, cell death, and cell migration. STK3/MST2 and STK4/MST1 are required to repress proliferation of mature hepatocytes, to prevent activation of facultative adult liver stem cells (oval cells), and to inhibit tumor formation. Phosphorylates 'Ser-14' of histone H2B (H2BS14ph) during apoptosis. Phosphorylates FOXO3 upon oxidative stress, which results in its nuclear translocation and cell death initiation. Phosphorylates MOBKL1A, MOBKL1B and RASSF2. Phosphorylates TNNI3 (cardiac Tn-I) and alters its binding affinity to TNNC1 (cardiac Tn-C) and TNNT2 (cardiac Tn-T). Phosphorylates FOXO1 on 'Ser-212' and regulates its activation and stimulates transcription of PMAIP1 in a FOXO1-dependent manner. Phosphorylates SIRT1 and inhibits SIRT1-mediated p53/TP53 deacetylation, thereby promoting p53/TP53 dependent transcription and apoptosis upon DNA damage. Acts as an inhibitor of PKB/AKT1. Phosphorylates AR on 'Ser-650' and suppresses its activity by intersecting with PKB/AKT1 signaling and antagonizing formation of AR-chromatin complexes. This chain is Serine/threonine-protein kinase 4 (STK4), found in Colobus guereza (Mantled guereza).